Here is a 423-residue protein sequence, read N- to C-terminus: Large ribosomal subunit protein mL37 (423 aa).

A mitochondrion-targeting transit peptide spans 1–29 (MALASGPARRALAGSGQLGLGGFGAPRRG).

The protein belongs to the mitochondrion-specific ribosomal protein mL37 family. As to quaternary structure, component of the mitochondrial large ribosomal subunit (mt-LSU). Mature mammalian 55S mitochondrial ribosomes consist of a small (28S) and a large (39S) subunit. The 28S small subunit contains a 12S ribosomal RNA (12S mt-rRNA) and 30 different proteins. The 39S large subunit contains a 16S rRNA (16S mt-rRNA), a copy of mitochondrial valine transfer RNA (mt-tRNA(Val)), which plays an integral structural role, and 52 different proteins. mL37 forms a heterodimer with mL65.

Its subcellular location is the mitochondrion. This Homo sapiens (Human) protein is Large ribosomal subunit protein mL37 (MRPL37).